The sequence spans 369 residues: UDP-N-acetylglucosamine--N-acetylmuramyl-(pentapeptide) pyrophosphoryl-undecaprenol N-acetylglucosamine transferase (369 aa).

UDP-N-acetyl-alpha-D-glucosamine contacts are provided by residues 15 to 17 (TGG), asparagine 126, arginine 169, serine 197, and glutamine 299.

Belongs to the glycosyltransferase 28 family. MurG subfamily.

The protein resides in the cell inner membrane. The enzyme catalyses di-trans,octa-cis-undecaprenyl diphospho-N-acetyl-alpha-D-muramoyl-L-alanyl-D-glutamyl-meso-2,6-diaminopimeloyl-D-alanyl-D-alanine + UDP-N-acetyl-alpha-D-glucosamine = di-trans,octa-cis-undecaprenyl diphospho-[N-acetyl-alpha-D-glucosaminyl-(1-&gt;4)]-N-acetyl-alpha-D-muramoyl-L-alanyl-D-glutamyl-meso-2,6-diaminopimeloyl-D-alanyl-D-alanine + UDP + H(+). Its pathway is cell wall biogenesis; peptidoglycan biosynthesis. Cell wall formation. Catalyzes the transfer of a GlcNAc subunit on undecaprenyl-pyrophosphoryl-MurNAc-pentapeptide (lipid intermediate I) to form undecaprenyl-pyrophosphoryl-MurNAc-(pentapeptide)GlcNAc (lipid intermediate II). The polypeptide is UDP-N-acetylglucosamine--N-acetylmuramyl-(pentapeptide) pyrophosphoryl-undecaprenol N-acetylglucosamine transferase (Methylorubrum extorquens (strain PA1) (Methylobacterium extorquens)).